The following is a 349-amino-acid chain: Magnesium-protoporphyrin IX monomethyl ester [oxidative] cyclase (349 aa).

A compositionally biased stretch (low complexity) spans methionine 1–threonine 10. Residues methionine 1–leucine 23 are disordered.

This sequence belongs to the AcsF family. Requires Fe cation as cofactor.

The catalysed reaction is Mg-protoporphyrin IX 13-monomethyl ester + 3 NADPH + 3 O2 + 2 H(+) = 3,8-divinyl protochlorophyllide a + 3 NADP(+) + 5 H2O. Its pathway is porphyrin-containing compound metabolism; chlorophyll biosynthesis (light-independent). Its function is as follows. Catalyzes the formation of the isocyclic ring in chlorophyll biosynthesis. Mediates the cyclase reaction, which results in the formation of divinylprotochlorophyllide (Pchlide) characteristic of all chlorophylls from magnesium-protoporphyrin IX 13-monomethyl ester (MgPMME). In Prochlorococcus marinus (strain MIT 9313), this protein is Magnesium-protoporphyrin IX monomethyl ester [oxidative] cyclase.